We begin with the raw amino-acid sequence, 319 residues long: Acetyl-coenzyme A carboxylase carboxyl transferase subunit alpha (319 aa).

In terms of domain architecture, CoA carboxyltransferase C-terminal spans 35–296; the sequence is DLDKEIKQLE…KQRLIEQLNE (262 aa).

This sequence belongs to the AccA family. In terms of assembly, acetyl-CoA carboxylase is a heterohexamer composed of biotin carboxyl carrier protein (AccB), biotin carboxylase (AccC) and two subunits each of ACCase subunit alpha (AccA) and ACCase subunit beta (AccD).

The protein resides in the cytoplasm. It catalyses the reaction N(6)-carboxybiotinyl-L-lysyl-[protein] + acetyl-CoA = N(6)-biotinyl-L-lysyl-[protein] + malonyl-CoA. Its pathway is lipid metabolism; malonyl-CoA biosynthesis; malonyl-CoA from acetyl-CoA: step 1/1. Functionally, component of the acetyl coenzyme A carboxylase (ACC) complex. First, biotin carboxylase catalyzes the carboxylation of biotin on its carrier protein (BCCP) and then the CO(2) group is transferred by the carboxyltransferase to acetyl-CoA to form malonyl-CoA. This is Acetyl-coenzyme A carboxylase carboxyl transferase subunit alpha from Aliivibrio salmonicida (strain LFI1238) (Vibrio salmonicida (strain LFI1238)).